We begin with the raw amino-acid sequence, 628 residues long: UvrABC system protein C (628 aa).

One can recognise a GIY-YIG domain in the interval 21–100; the sequence is TGPGIYQFKN…IKELKPRYNV (80 aa). The 36-residue stretch at 214–249 folds into the UVR domain; the sequence is AGLLKELHEKMLTAAAELRFEEAAELKMQLQSLRRY.

It belongs to the UvrC family. As to quaternary structure, interacts with UvrB in an incision complex.

It localises to the cytoplasm. Functionally, the UvrABC repair system catalyzes the recognition and processing of DNA lesions. UvrC both incises the 5' and 3' sides of the lesion. The N-terminal half is responsible for the 3' incision and the C-terminal half is responsible for the 5' incision. In Chlorobium luteolum (strain DSM 273 / BCRC 81028 / 2530) (Pelodictyon luteolum), this protein is UvrABC system protein C.